The primary structure comprises 198 residues: COMM domain-containing protein 9 (198 aa).

A2 is subject to N-acetylalanine. One can recognise a COMM domain in the interval R122–A196.

Belongs to the COMM domain-containing protein 9 family. In terms of assembly, component of the commander complex consisting of the CCC subcomplex and the retriever subcomplex. Component of the CCC (COMMD/CCDC22/CCDC93) subcomplex consisting of COMMD1, COMMD2, COMMD3, COMMD4, COMMD5, COMMD6, COMMD7, COMMD8, COMMD9, COMMD10, CCDC22 and CCDC93; within the complex forms a heterodimer with COMMD7. Interacts with RELB and NFKB1/p105. Interacts with CCDC22, CCDC93, SCNN1B, CUL1. Ubiquitous.

Its subcellular location is the nucleus. The protein localises to the cytoplasmic vesicle. Scaffold protein in the commander complex that is essential for endosomal recycling of transmembrane cargos; the commander complex is composed of the CCC subcomplex and the retriever subcomplex. May modulate activity of cullin-RING E3 ubiquitin ligase (CRL) complexes. May down-regulate activation of NF-kappa-B. Modulates Na(+) transport in epithelial cells by regulation of apical cell surface expression of amiloride-sensitive sodium channel (ENaC) subunits. This is COMM domain-containing protein 9 (COMMD9) from Homo sapiens (Human).